Consider the following 296-residue polypeptide: Maltose/maltodextrin transport system permease protein MalG (296 aa).

Residues 1 to 12 lie on the Cytoplasmic side of the membrane; the sequence is MAMVQPKSQKLR. A helical transmembrane segment spans residues 13 to 35; that stretch reads LLITHLGLLIFIAAIMFPLLMVI. Residues 36–88 are Periplasmic-facing; it reads AISLREGNFATGSLIPDKISWEHWRLALGFSVEHADGRVTPPPFPVLLWLWNS. The region spanning 85-281 is the ABC transmembrane type-1 domain; sequence LWNSVKIAGI…IPITLVFLLA (197 aa). A helical membrane pass occupies residues 89–111; that stretch reads VKIAGITAIGIVALSTTCAYAFA. Residues 112–123 lie on the Cytoplasmic side of the membrane; the sequence is RMRFPGKATLLK. The chain crosses the membrane as a helical span at residues 124–143; it reads GMLIFQMFPAVLSLVALYAL. Topologically, residues 144-152 are periplasmic; the sequence is FDRLGQYIP. A helical membrane pass occupies residues 153 to 175; that stretch reads FIGLNTHGGVIFAYLGGIALHVW. The Cytoplasmic portion of the chain corresponds to 176-204; it reads TIKGYFETIDSSLEEAAALDGATPWQAFR. A helical transmembrane segment spans residues 205 to 227; sequence LVLLPLSVPILAVVFILSFIAAI. Residues 228 to 257 are Periplasmic-facing; that stretch reads TEVPVASLLLRDVDSYTLAVGMQQYLNPQN. The chain crosses the membrane as a helical span at residues 258–280; that stretch reads YLWGDFAAAAVLSAIPITLVFLL. The Cytoplasmic portion of the chain corresponds to 281-296; the sequence is AQRWLVNGLTAGGVKG.

It belongs to the binding-protein-dependent transport system permease family. MalFG subfamily. The complex is composed of two ATP-binding proteins (MalK), two transmembrane proteins (MalG and MalF) and a solute-binding protein (MalE).

It is found in the cell inner membrane. Its function is as follows. Part of the ABC transporter complex MalEFGK involved in maltose/maltodextrin import. Probably responsible for the translocation of the substrate across the membrane. The protein is Maltose/maltodextrin transport system permease protein MalG (malG) of Salmonella typhimurium (strain LT2 / SGSC1412 / ATCC 700720).